Consider the following 425-residue polypeptide: Gamma-glutamyl phosphate reductase (425 aa).

This sequence belongs to the gamma-glutamyl phosphate reductase family.

Its subcellular location is the cytoplasm. The enzyme catalyses L-glutamate 5-semialdehyde + phosphate + NADP(+) = L-glutamyl 5-phosphate + NADPH + H(+). It participates in amino-acid biosynthesis; L-proline biosynthesis; L-glutamate 5-semialdehyde from L-glutamate: step 2/2. Catalyzes the NADPH-dependent reduction of L-glutamate 5-phosphate into L-glutamate 5-semialdehyde and phosphate. The product spontaneously undergoes cyclization to form 1-pyrroline-5-carboxylate. This Xylella fastidiosa (strain M23) protein is Gamma-glutamyl phosphate reductase.